The primary structure comprises 120 residues: Aspartate 1-decarboxylase (120 aa).

Catalysis depends on Ser-25, which acts as the Schiff-base intermediate with substrate; via pyruvic acid. Ser-25 carries the post-translational modification Pyruvic acid (Ser). Thr-57 provides a ligand contact to substrate. Residue Tyr-58 is the Proton donor of the active site. 73–75 (GAA) contributes to the substrate binding site.

It belongs to the PanD family. As to quaternary structure, heterooctamer of four alpha and four beta subunits. Requires pyruvate as cofactor. Post-translationally, is synthesized initially as an inactive proenzyme, which is activated by self-cleavage at a specific serine bond to produce a beta-subunit with a hydroxyl group at its C-terminus and an alpha-subunit with a pyruvoyl group at its N-terminus.

The protein localises to the cytoplasm. The catalysed reaction is L-aspartate + H(+) = beta-alanine + CO2. It participates in cofactor biosynthesis; (R)-pantothenate biosynthesis; beta-alanine from L-aspartate: step 1/1. Functionally, catalyzes the pyruvoyl-dependent decarboxylation of aspartate to produce beta-alanine. This Thermus thermophilus (strain ATCC 27634 / DSM 579 / HB8) protein is Aspartate 1-decarboxylase.